The following is a 396-amino-acid chain: Acetate kinase (396 aa).

Position 8 (Asn-8) interacts with Mg(2+). An ATP-binding site is contributed by Lys-15. Arg-89 provides a ligand contact to substrate. The Proton donor/acceptor role is filled by Asp-146. Residues 206–210, 283–285, and 331–335 each bind ATP; these read HIGNG, DMR, and GVGEN. Mg(2+) is bound at residue Glu-383.

This sequence belongs to the acetokinase family. As to quaternary structure, homodimer. The cofactor is Mg(2+). Mn(2+) serves as cofactor.

The protein resides in the cytoplasm. The enzyme catalyses acetate + ATP = acetyl phosphate + ADP. It functions in the pathway metabolic intermediate biosynthesis; acetyl-CoA biosynthesis; acetyl-CoA from acetate: step 1/2. In terms of biological role, catalyzes the formation of acetyl phosphate from acetate and ATP. Can also catalyze the reverse reaction. The chain is Acetate kinase from Streptococcus pneumoniae serotype 2 (strain D39 / NCTC 7466).